The following is a 437-amino-acid chain: Chromosomal replication initiator protein DnaA (437 aa).

A domain I, interacts with DnaA modulators region spans residues Met1–Glu74. Residues Glu74–Phe98 form a domain II region. The interval Gln99–Lys315 is domain III, AAA+ region. ATP is bound by residues Gly142, Gly144, Lys145, and Thr146. The interval Lys316–Gln437 is domain IV, binds dsDNA.

It belongs to the DnaA family. In terms of assembly, oligomerizes as a right-handed, spiral filament on DNA at oriC.

The protein resides in the cytoplasm. In terms of biological role, plays an essential role in the initiation and regulation of chromosomal replication. ATP-DnaA binds to the origin of replication (oriC) to initiate formation of the DNA replication initiation complex once per cell cycle. Binds the DnaA box (a 9 base pair repeat at the origin) and separates the double-stranded (ds)DNA. Forms a right-handed helical filament on oriC DNA; dsDNA binds to the exterior of the filament while single-stranded (ss)DNA is stabiized in the filament's interior. The ATP-DnaA-oriC complex binds and stabilizes one strand of the AT-rich DNA unwinding element (DUE), permitting loading of DNA polymerase. After initiation quickly degrades to an ADP-DnaA complex that is not apt for DNA replication. Binds acidic phospholipids. The protein is Chromosomal replication initiator protein DnaA of Leptospira borgpetersenii serovar Hardjo-bovis (strain JB197).